Reading from the N-terminus, the 320-residue chain is L-lactate dehydrogenase (320 aa).

Residues Val19, Asp40, Arg45, and 85-86 (GA) contribute to the NAD(+) site. Residues Gln88 and Arg94 each contribute to the substrate site. NAD(+) is bound by residues Ser107, 124-126 (ITN), and Ser149. Residue 126–129 (NPVD) coordinates substrate. 154–157 (DSAR) is a binding site for substrate. Residues Arg159 and His174 each contribute to the beta-D-fructose 1,6-bisphosphate site. The active-site Proton acceptor is the His181. Tyr228 bears the Phosphotyrosine mark. Thr237 provides a ligand contact to substrate.

This sequence belongs to the LDH/MDH superfamily. LDH family. Homotetramer.

It localises to the cytoplasm. It catalyses the reaction (S)-lactate + NAD(+) = pyruvate + NADH + H(+). Its pathway is fermentation; pyruvate fermentation to lactate; (S)-lactate from pyruvate: step 1/1. With respect to regulation, allosterically activated by fructose 1,6-bisphosphate (FBP). In terms of biological role, catalyzes the conversion of lactate to pyruvate. The sequence is that of L-lactate dehydrogenase from Bifidobacterium animalis subsp. lactis (strain AD011).